A 549-amino-acid polypeptide reads, in one-letter code: Guanine nucleotide-binding protein-like 3 (549 aa).

Over residues 1–45 the composition is skewed to basic residues; the sequence is MKRPKLKKASKRMTCHKRYKIQKKVREHHRKLRKEAKKRGHKKPR. Disordered regions lie at residues 1-56 and 73-104; these read MKRP…SAPF and ELKQ…SNVE. Residues 2–46 are basic; the sequence is KRPKLKKASKRMTCHKRYKIQKKVREHHRKLRKEAKKRGHKKPRK. Residues 56–95 adopt a coiled-coil conformation; that stretch reads FKEALLREAELRKQRLEELKQQQKLDRQKELEKKRKLETN. Basic and acidic residues predominate over residues 73-96; it reads ELKQQQKLDRQKELEKKRKLETNP. Residue lysine 79 is modified to N6-acetyllysine. Residues lysine 91 and lysine 99 each participate in a glycyl lysine isopeptide (Lys-Gly) (interchain with G-Cter in SUMO2) cross-link. Residue serine 101 is modified to Phosphoserine. Residues lysine 114, lysine 179, lysine 196, lysine 253, lysine 267, and lysine 275 each participate in a glycyl lysine isopeptide (Lys-Gly) (interchain with G-Cter in SUMO2) cross-link. One can recognise a CP-type G domain in the interval 131–312; the sequence is CQELKKVIEA…IIDSPSFIVS (182 aa). 178–181 lines the GTP pocket; sequence NKSD. 261 to 268 provides a ligand contact to GTP; it reads GFPNVGKS. An intermediate region spans residues 282–456; the sequence is VGVSMGLTRS…HLANSILFQS (175 aa). Residue 305-308 participates in GTP binding; that stretch reads DSPS. The tract at residues 465–543 is acidic; the sequence is EEKDIHEELP…KIIEEDDAYD (79 aa). Residues 474 to 483 are compositionally biased toward basic and acidic residues; sequence PKRKERKQEE. The interval 474-532 is disordered; it reads PKRKERKQEEREDDKDSDQETVDEEVDENSSGMFAAEETGEALSEETTAGEQSTRSFIL. Residues 484–501 show a composition bias toward acidic residues; that stretch reads REDDKDSDQETVDEEVDE. 4 positions are modified to phosphoserine: serine 490, serine 504, serine 517, and serine 529. Over residues 518–529 the composition is skewed to polar residues; that stretch reads EETTAGEQSTRS.

Belongs to the TRAFAC class YlqF/YawG GTPase family. As to quaternary structure, interacts with MDM2; this interaction stabilizes MDM2. Interaction with MDM2 occurs in the nucleoplasm and is triggered by a nucleolar release mechanism, such as mitosis-induced nucleolar disassembly. Indirectly interacts with TP53, via MDM2-binding. Interacts with TSC22D1 isoform 2. As to expression, increased levels in lung tissue in cancer patients.

The protein localises to the nucleus. It localises to the nucleolus. In terms of biological role, may be required to maintain the proliferative capacity of stem cells. Stabilizes MDM2 by preventing its ubiquitination, and hence proteasomal degradation. The protein is Guanine nucleotide-binding protein-like 3 (GNL3) of Homo sapiens (Human).